We begin with the raw amino-acid sequence, 178 residues long: ATP synthase subunit delta (178 aa).

Belongs to the ATPase delta chain family. F-type ATPases have 2 components, F(1) - the catalytic core - and F(0) - the membrane proton channel. F(1) has five subunits: alpha(3), beta(3), gamma(1), delta(1), epsilon(1). F(0) has three main subunits: a(1), b(2) and c(10-14). The alpha and beta chains form an alternating ring which encloses part of the gamma chain. F(1) is attached to F(0) by a central stalk formed by the gamma and epsilon chains, while a peripheral stalk is formed by the delta and b chains.

The protein localises to the cell inner membrane. F(1)F(0) ATP synthase produces ATP from ADP in the presence of a proton or sodium gradient. F-type ATPases consist of two structural domains, F(1) containing the extramembraneous catalytic core and F(0) containing the membrane proton channel, linked together by a central stalk and a peripheral stalk. During catalysis, ATP synthesis in the catalytic domain of F(1) is coupled via a rotary mechanism of the central stalk subunits to proton translocation. In terms of biological role, this protein is part of the stalk that links CF(0) to CF(1). It either transmits conformational changes from CF(0) to CF(1) or is implicated in proton conduction. The sequence is that of ATP synthase subunit delta from Dechloromonas aromatica (strain RCB).